Consider the following 270-residue polypeptide: Monofunctional glycosyltransferase (270 aa).

Positions 1-10 are enriched in polar residues; that stretch reads MKRSQRMNNS. The tract at residues 1–36 is disordered; the sequence is MKRSQRMNNSPERHSQYRNEPHYNTYYQPVGKPPKK. Over residues 11-21 the composition is skewed to basic and acidic residues; that stretch reads PERHSQYRNEP. The chain crosses the membrane as a helical span at residues 42–62; the sequence is IFLRLFIIFVFIYALFIGLMY.

The protein belongs to the glycosyltransferase 51 family.

The protein resides in the cell membrane. The enzyme catalyses [GlcNAc-(1-&gt;4)-Mur2Ac(oyl-L-Ala-gamma-D-Glu-L-Lys-D-Ala-D-Ala)](n)-di-trans,octa-cis-undecaprenyl diphosphate + beta-D-GlcNAc-(1-&gt;4)-Mur2Ac(oyl-L-Ala-gamma-D-Glu-L-Lys-D-Ala-D-Ala)-di-trans,octa-cis-undecaprenyl diphosphate = [GlcNAc-(1-&gt;4)-Mur2Ac(oyl-L-Ala-gamma-D-Glu-L-Lys-D-Ala-D-Ala)](n+1)-di-trans,octa-cis-undecaprenyl diphosphate + di-trans,octa-cis-undecaprenyl diphosphate + H(+). The protein operates within cell wall biogenesis; peptidoglycan biosynthesis. In terms of biological role, peptidoglycan polymerase that catalyzes glycan chain elongation using lipid-linked disaccharide-pentapeptide as the substrate. This Staphylococcus haemolyticus (strain JCSC1435) protein is Monofunctional glycosyltransferase.